A 179-amino-acid chain; its full sequence is Large ribosomal subunit protein uL6 (179 aa).

Belongs to the universal ribosomal protein uL6 family. In terms of assembly, part of the 50S ribosomal subunit.

Functionally, this protein binds to the 23S rRNA, and is important in its secondary structure. It is located near the subunit interface in the base of the L7/L12 stalk, and near the tRNA binding site of the peptidyltransferase center. This Prochlorococcus marinus (strain SARG / CCMP1375 / SS120) protein is Large ribosomal subunit protein uL6.